The primary structure comprises 244 residues: Phosphatidylinositol phosphate synthase (244 aa).

3 helical membrane-spanning segments follow: residues 24-42 (YARAFFTRVLTPFAAFLIR), 49-66 (TVTLLGTAGVIAGALVFY), and 72-91 (FWGTIVITLFVFSDLVDGNM). 48–51 (DTVT) lines the a CDP-1,2-diacyl-sn-glycerol pocket. Mg(2+) contacts are provided by D85 and D88. G89, R93, and S99 together coordinate a CDP-1,2-diacyl-sn-glycerol. Mg(2+) is bound by residues D106 and D110. The active-site Proton acceptor is D110. 3 helical membrane passes run 117–137 (IFGGFALWYAGGGDNNVLCAV), 174–190 (LVISLVAAGFAGLHKFG), and 196–214 (VLLPIALWIVAVGSLVTLI).

This sequence belongs to the CDP-alcohol phosphatidyltransferase class-I family. In terms of assembly, homodimer. Mg(2+) is required as a cofactor.

The protein localises to the cell membrane. The catalysed reaction is a CDP-1,2-diacyl-sn-glycerol + 1D-myo-inositol 3-phosphate = a 1,2-diacyl-sn-glycero-3-phospho-(1D-myo-inositol-3-phosphate) + CMP + H(+). The enzyme catalyses 1,2-di-(9Z-octadecenoyl)-sn-glycero-3-cytidine-5'-diphosphate + 1D-myo-inositol 3-phosphate = 1,2-di-(9Z-octadecenoyl)-sn-glycero-3-phospho-(1D-myo-inositol-3-phosphate) + CMP + H(+). It functions in the pathway phospholipid metabolism; phosphatidylinositol phosphate biosynthesis. Functionally, catalyzes the conjugation of the 1'-hydroxyl group of D-myo-inositol-3-phosphate (also named L-myo-inositol-1-phosphate) with a lipid tail of cytidine diphosphate diacylglycerol (CDP-DAG), forming phosphatidylinositol phosphate (PIP) and CMP. PIP is a precursor of phosphatidylinositol (PI) which is an essential lipid required for cell wall formation. The protein is Phosphatidylinositol phosphate synthase of Streptomyces avermitilis (strain ATCC 31267 / DSM 46492 / JCM 5070 / NBRC 14893 / NCIMB 12804 / NRRL 8165 / MA-4680).